A 728-amino-acid polypeptide reads, in one-letter code: 1,4-alpha-glucan branching enzyme GlgB (728 aa).

Asp-405 functions as the Nucleophile in the catalytic mechanism. Glu-458 serves as the catalytic Proton donor.

This sequence belongs to the glycosyl hydrolase 13 family. GlgB subfamily. Monomer.

The enzyme catalyses Transfers a segment of a (1-&gt;4)-alpha-D-glucan chain to a primary hydroxy group in a similar glucan chain.. It functions in the pathway glycan biosynthesis; glycogen biosynthesis. Its function is as follows. Catalyzes the formation of the alpha-1,6-glucosidic linkages in glycogen by scission of a 1,4-alpha-linked oligosaccharide from growing alpha-1,4-glucan chains and the subsequent attachment of the oligosaccharide to the alpha-1,6 position. The chain is 1,4-alpha-glucan branching enzyme GlgB from Citrobacter koseri (strain ATCC BAA-895 / CDC 4225-83 / SGSC4696).